The chain runs to 130 residues: Large ribosomal subunit protein bL12 (130 aa).

Belongs to the bacterial ribosomal protein bL12 family. In terms of assembly, homodimer. Part of the ribosomal stalk of the 50S ribosomal subunit. Forms a multimeric L10(L12)X complex, where L10 forms an elongated spine to which 2 to 4 L12 dimers bind in a sequential fashion. Binds GTP-bound translation factors.

Its function is as follows. Forms part of the ribosomal stalk which helps the ribosome interact with GTP-bound translation factors. Is thus essential for accurate translation. The chain is Large ribosomal subunit protein bL12 from Nostoc sp. (strain PCC 7120 / SAG 25.82 / UTEX 2576).